A 591-amino-acid polypeptide reads, in one-letter code: V-type ATP synthase alpha chain (591 aa).

ATP is bound at residue 232-239; sequence GPFGAGKT.

It belongs to the ATPase alpha/beta chains family.

The enzyme catalyses ATP + H2O + 4 H(+)(in) = ADP + phosphate + 5 H(+)(out). Its function is as follows. Produces ATP from ADP in the presence of a proton gradient across the membrane. The V-type alpha chain is a catalytic subunit. This Clostridium perfringens (strain ATCC 13124 / DSM 756 / JCM 1290 / NCIMB 6125 / NCTC 8237 / Type A) protein is V-type ATP synthase alpha chain.